The primary structure comprises 217 residues: Uracil-DNA glycosylase (217 aa).

Asp62 (proton acceptor) is an active-site residue.

The protein belongs to the uracil-DNA glycosylase (UDG) superfamily. UNG family.

The protein resides in the cytoplasm. It carries out the reaction Hydrolyzes single-stranded DNA or mismatched double-stranded DNA and polynucleotides, releasing free uracil.. In terms of biological role, excises uracil residues from the DNA which can arise as a result of misincorporation of dUMP residues by DNA polymerase or due to deamination of cytosine. The polypeptide is Uracil-DNA glycosylase (Streptococcus equi subsp. zooepidemicus (strain H70)).